The following is a 139-amino-acid chain: MLIPRRVKYRKQHHPKRTGAAKGGTQLAFGDYGIQATEGGYLTNRQIEAARIAMTRYIKRGGKVWINVYPDRPMTKHPAESRMGSGKGTPEWWIANIKPGRVLFELSGVPEDVAREAMRLAIHKLPMKARFISREGGDN.

The segment covering 1-19 has biased composition (basic residues); that stretch reads MLIPRRVKYRKQHHPKRTG. A disordered region spans residues 1–23; it reads MLIPRRVKYRKQHHPKRTGAAKG.

This sequence belongs to the universal ribosomal protein uL16 family. As to quaternary structure, part of the 50S ribosomal subunit.

Its function is as follows. Binds 23S rRNA and is also seen to make contacts with the A and possibly P site tRNAs. In Cutibacterium acnes (strain DSM 16379 / KPA171202) (Propionibacterium acnes), this protein is Large ribosomal subunit protein uL16.